We begin with the raw amino-acid sequence, 301 residues long: Protein FdhE homolog (301 aa).

This sequence belongs to the FdhE family.

It is found in the cytoplasm. In terms of biological role, necessary for formate dehydrogenase activity. The protein is Protein FdhE homolog of Erwinia tasmaniensis (strain DSM 17950 / CFBP 7177 / CIP 109463 / NCPPB 4357 / Et1/99).